Here is a 143-residue protein sequence, read N- to C-terminus: Ribosome-binding factor A (143 aa).

Residues 1-20 (MRFMGKNKFHTGPGPSQRQL) are disordered.

Belongs to the RbfA family. Monomer. Binds 30S ribosomal subunits, but not 50S ribosomal subunits or 70S ribosomes.

The protein resides in the cytoplasm. Its function is as follows. One of several proteins that assist in the late maturation steps of the functional core of the 30S ribosomal subunit. Associates with free 30S ribosomal subunits (but not with 30S subunits that are part of 70S ribosomes or polysomes). Required for efficient processing of 16S rRNA. May interact with the 5'-terminal helix region of 16S rRNA. The chain is Ribosome-binding factor A from Roseobacter denitrificans (strain ATCC 33942 / OCh 114) (Erythrobacter sp. (strain OCh 114)).